Consider the following 242-residue polypeptide: Enolase-phosphatase E1 (242 aa).

This sequence belongs to the HAD-like hydrolase superfamily. MasA/MtnC family. In terms of assembly, monomer. Requires Mg(2+) as cofactor.

It carries out the reaction 5-methylsulfanyl-2,3-dioxopentyl phosphate + H2O = 1,2-dihydroxy-5-(methylsulfanyl)pent-1-en-3-one + phosphate. Its pathway is amino-acid biosynthesis; L-methionine biosynthesis via salvage pathway; L-methionine from S-methyl-5-thio-alpha-D-ribose 1-phosphate: step 3/6. The protein operates within amino-acid biosynthesis; L-methionine biosynthesis via salvage pathway; L-methionine from S-methyl-5-thio-alpha-D-ribose 1-phosphate: step 4/6. Bifunctional enzyme that catalyzes the enolization of 2,3-diketo-5-methylthiopentyl-1-phosphate (DK-MTP-1-P) into the intermediate 2-hydroxy-3-keto-5-methylthiopentenyl-1-phosphate (HK-MTPenyl-1-P), which is then dephosphorylated to form the acireductone 1,2-dihydroxy-3-keto-5-methylthiopentene (DHK-MTPene). This chain is Enolase-phosphatase E1, found in Synechococcus sp. (strain WH7803).